We begin with the raw amino-acid sequence, 400 residues long: Chorismate synthase (400 aa).

NADP(+) contacts are provided by arginine 40 and arginine 46. Residues 135 to 137, 257 to 258, glycine 301, 316 to 320, and arginine 342 each bind FMN; these read RAS, QA, and KPIST.

It belongs to the chorismate synthase family. In terms of assembly, homotetramer. FMNH2 is required as a cofactor.

It catalyses the reaction 5-O-(1-carboxyvinyl)-3-phosphoshikimate = chorismate + phosphate. It functions in the pathway metabolic intermediate biosynthesis; chorismate biosynthesis; chorismate from D-erythrose 4-phosphate and phosphoenolpyruvate: step 7/7. Its function is as follows. Catalyzes the anti-1,4-elimination of the C-3 phosphate and the C-6 proR hydrogen from 5-enolpyruvylshikimate-3-phosphate (EPSP) to yield chorismate, which is the branch point compound that serves as the starting substrate for the three terminal pathways of aromatic amino acid biosynthesis. This reaction introduces a second double bond into the aromatic ring system. The sequence is that of Chorismate synthase from Tropheryma whipplei (strain TW08/27) (Whipple's bacillus).